The primary structure comprises 249 residues: uncharacterized protein (249 aa).

It belongs to the chlamydial CPn_0206/CT203/TC_0475 family.

This is an uncharacterized protein from Chlamydia muridarum (strain MoPn / Nigg).